Consider the following 163-residue polypeptide: Phosphopantetheine adenylyltransferase (163 aa).

S11 serves as a coordination point for substrate. Residues 11 to 12 (SF) and H19 each bind ATP. The substrate site is built by K43, A76, and R90. ATP is bound by residues 91–93 (GLR), E101, and 126–132 (WQALSSS).

It belongs to the bacterial CoaD family. Homohexamer. Requires Mg(2+) as cofactor.

The protein resides in the cytoplasm. It catalyses the reaction (R)-4'-phosphopantetheine + ATP + H(+) = 3'-dephospho-CoA + diphosphate. It participates in cofactor biosynthesis; coenzyme A biosynthesis; CoA from (R)-pantothenate: step 4/5. In terms of biological role, reversibly transfers an adenylyl group from ATP to 4'-phosphopantetheine, yielding dephospho-CoA (dPCoA) and pyrophosphate. The chain is Phosphopantetheine adenylyltransferase from Streptococcus pyogenes serotype M6 (strain ATCC BAA-946 / MGAS10394).